The sequence spans 453 residues: MTNALQATPKIGFVSLGCPKALVDSEQILTQLRAEGYDTAKSYDGADLVIVNTCGFIDAAVQESLDAIGEALHENGKVIVTGCLGAKKDADGDDIIQKVHPKVLAVTGPHALGEVMDAVHKHMPKPHAPFIDLVPAQGIKLTPKHFAYLKISEGCNHRCSFCIIPSMRGDLVSRPIADVMMEAENLFKAGVKELLVISQDTSAYGVDVKFRMGFWNGKPVKTHMTQLVEALGELAKQYGAWVRLHYVYPYPHVDAIIPMMAEGKILPYLDVPLQHAHPDVLKRMKRPASGEKNIERIQAWRAMCPDLTIRSTFIAGFPGETDAEFEYLLDFLKEAEIDRLGCFAYSPVEGATANDLPNAVPEEVREERRGRVMLLQEEISKKRLQAKVGKTMRVLLDEVNRNGGVARSGADAPEIDGVVYVKPPYEPHLKLKVGEFIDVKITGADAHDLWAEA.

Positions 9 to 124 (PKIGFVSLGC…VMDAVHKHMP (116 aa)) constitute an MTTase N-terminal domain. Positions 18, 54, 83, 155, 159, and 162 each coordinate [4Fe-4S] cluster. Residues 141–382 (LTPKHFAYLK…MLLQEEISKK (242 aa)) form the Radical SAM core domain. Residues 385-453 (QAKVGKTMRV…ADAHDLWAEA (69 aa)) enclose the TRAM domain.

This sequence belongs to the methylthiotransferase family. RimO subfamily. [4Fe-4S] cluster serves as cofactor.

Its subcellular location is the cytoplasm. It carries out the reaction L-aspartate(89)-[ribosomal protein uS12]-hydrogen + (sulfur carrier)-SH + AH2 + 2 S-adenosyl-L-methionine = 3-methylsulfanyl-L-aspartate(89)-[ribosomal protein uS12]-hydrogen + (sulfur carrier)-H + 5'-deoxyadenosine + L-methionine + A + S-adenosyl-L-homocysteine + 2 H(+). Catalyzes the methylthiolation of an aspartic acid residue of ribosomal protein uS12. This Janthinobacterium sp. (strain Marseille) (Minibacterium massiliensis) protein is Ribosomal protein uS12 methylthiotransferase RimO.